The chain runs to 651 residues: ATP-dependent zinc metalloprotease FtsH (651 aa).

Residues 1–134 (MIVFATILFG…FTTDPQTAGP (134 aa)) lie on the Extracellular side of the membrane. A helical transmembrane segment spans residues 135-155 (WARAIAVMAPFVLILLLFFLM). At 156–651 (TRTGRSASQS…PAMSVNGHRG (496 aa)) the chain is on the cytoplasmic side. 229 to 236 (GPPGTGKT) serves as a coordination point for ATP. His451 contributes to the Zn(2+) binding site. The active site involves Glu452. Positions 455 and 527 each coordinate Zn(2+).

In the central section; belongs to the AAA ATPase family. It in the C-terminal section; belongs to the peptidase M41 family. In terms of assembly, homohexamer. Zn(2+) serves as cofactor.

The protein localises to the cell membrane. In terms of biological role, acts as a processive, ATP-dependent zinc metallopeptidase for both cytoplasmic and membrane proteins. Plays a role in the quality control of integral membrane proteins. The protein is ATP-dependent zinc metalloprotease FtsH of Rubrobacter xylanophilus (strain DSM 9941 / JCM 11954 / NBRC 16129 / PRD-1).